Reading from the N-terminus, the 439-residue chain is Protein translocase subunit SecY (439 aa).

Helical transmembrane passes span 28–48, 73–93, 127–147, 156–176, 179–199, 220–240, 276–296, 318–338, 375–395, and 401–421; these read ILIT…PVPG, IFSG…LPYI, LTRY…AVWV, PLFT…VMWI, LITE…NIVA, VGGI…IVFV, GVMP…LANF, IYAL…SSLI, LTIL…AVEG, and TFQG…IDTA.

The protein belongs to the SecY/SEC61-alpha family. Component of the Sec protein translocase complex. Heterotrimer consisting of SecY, SecE and SecG subunits. The heterotrimers can form oligomers, although 1 heterotrimer is thought to be able to translocate proteins. Interacts with the ribosome. Interacts with SecDF, and other proteins may be involved. Interacts with SecA.

Its subcellular location is the cell inner membrane. It localises to the cellular thylakoid membrane. Its function is as follows. The central subunit of the protein translocation channel SecYEG. Consists of two halves formed by TMs 1-5 and 6-10. These two domains form a lateral gate at the front which open onto the bilayer between TMs 2 and 7, and are clamped together by SecE at the back. The channel is closed by both a pore ring composed of hydrophobic SecY resides and a short helix (helix 2A) on the extracellular side of the membrane which forms a plug. The plug probably moves laterally to allow the channel to open. The ring and the pore may move independently. This Synechococcus elongatus (strain ATCC 33912 / PCC 7942 / FACHB-805) (Anacystis nidulans R2) protein is Protein translocase subunit SecY.